A 362-amino-acid chain; its full sequence is Zinc phosphodiesterase ELAC protein 1 (362 aa).

Zn(2+) is bound by residues His62, His64, Asp66, His67, His181, Asp252, and His312. Asp66 serves as the catalytic Proton acceptor.

This sequence belongs to the RNase Z family. As to quaternary structure, homodimer. Zn(2+) is required as a cofactor.

Its subcellular location is the cytoplasm. It localises to the cytosol. The protein resides in the nucleus. The enzyme catalyses Endonucleolytic cleavage of RNA, removing extra 3' nucleotides from tRNA precursor, generating 3' termini of tRNAs. A 3'-hydroxy group is left at the tRNA terminus and a 5'-phosphoryl group is left at the trailer molecule.. Functionally, zinc phosphodiesterase, which displays some tRNA 3'-processing endonuclease activity. Specifically involved in tRNA repair: acts downstream of the ribosome-associated quality control (RQC) pathway by removing a 2',3'-cyclic phosphate from tRNAs following cleavage by ANKZF1. tRNAs are then processed by TRNT1. The chain is Zinc phosphodiesterase ELAC protein 1 (Elac1) from Mus musculus (Mouse).